Here is a 274-residue protein sequence, read N- to C-terminus: Large ribosomal subunit protein uL2 (274 aa).

The segment at 224–274 is disordered; sequence VMNPVDHPHGGGEGRSPIGRNPVTPWGKPALGARTRKKKPGDRLIVKRRAR. Residues 257 to 274 show a composition bias toward basic residues; it reads RTRKKKPGDRLIVKRRAR.

It belongs to the universal ribosomal protein uL2 family. In terms of assembly, part of the 50S ribosomal subunit. Forms a bridge to the 30S subunit in the 70S ribosome.

Its function is as follows. One of the primary rRNA binding proteins. Required for association of the 30S and 50S subunits to form the 70S ribosome, for tRNA binding and peptide bond formation. It has been suggested to have peptidyltransferase activity; this is somewhat controversial. Makes several contacts with the 16S rRNA in the 70S ribosome. The protein is Large ribosomal subunit protein uL2 of Pelotomaculum thermopropionicum (strain DSM 13744 / JCM 10971 / SI).